A 198-amino-acid polypeptide reads, in one-letter code: TM2 domain-containing protein 2 (198 aa).

The signal sequence occupies residues 1 to 27; the sequence is MRWPVPPLGYLLLGGQGLLLTFSLISS. Over 28–128 the chain is Extracellular; it reads QNNTSPVTYP…FLRGNRPCIK (101 aa). N-linked (GlcNAc...) asparagine glycosylation is found at Asn-29, Asn-40, and Asn-76. A helical transmembrane segment spans residues 129–149; the sequence is YTGHYFITTLLYSFFLGCFGV. In terms of domain architecture, TM2 spans 131 to 179; sequence GHYFITTLLYSFFLGCFGVDRFCLGHTGTAVGKLLTWGGLGIWWFVDLI. Over 150-166 the chain is Cytoplasmic; it reads DRFCLGHTGTAVGKLLT. A helical transmembrane segment spans residues 167–187; it reads WGGLGIWWFVDLILLITGGLM. The Extracellular portion of the chain corresponds to 188–198; the sequence is PSDNSNWCTIY.

The protein belongs to the TM2 family.

It is found in the membrane. This chain is TM2 domain-containing protein 2 (tm2d2), found in Xenopus laevis (African clawed frog).